Here is a 382-residue protein sequence, read N- to C-terminus: Queuine tRNA-ribosyltransferase (382 aa).

The active-site Proton acceptor is the Asp93. Substrate is bound by residues 93 to 97 (DSGGF), Asp147, Gln191, and Gly218. The RNA binding stretch occupies residues 249–255 (GVGKPED). The active-site Nucleophile is the Asp268. The RNA binding; important for wobble base 34 recognition stretch occupies residues 273–277 (TRNAR). 4 residues coordinate Zn(2+): Cys306, Cys308, Cys311, and His337.

It belongs to the queuine tRNA-ribosyltransferase family. As to quaternary structure, homodimer. Within each dimer, one monomer is responsible for RNA recognition and catalysis, while the other monomer binds to the replacement base PreQ1. It depends on Zn(2+) as a cofactor.

It catalyses the reaction 7-aminomethyl-7-carbaguanine + guanosine(34) in tRNA = 7-aminomethyl-7-carbaguanosine(34) in tRNA + guanine. The protein operates within tRNA modification; tRNA-queuosine biosynthesis. Functionally, catalyzes the base-exchange of a guanine (G) residue with the queuine precursor 7-aminomethyl-7-deazaguanine (PreQ1) at position 34 (anticodon wobble position) in tRNAs with GU(N) anticodons (tRNA-Asp, -Asn, -His and -Tyr). Catalysis occurs through a double-displacement mechanism. The nucleophile active site attacks the C1' of nucleotide 34 to detach the guanine base from the RNA, forming a covalent enzyme-RNA intermediate. The proton acceptor active site deprotonates the incoming PreQ1, allowing a nucleophilic attack on the C1' of the ribose to form the product. After dissociation, two additional enzymatic reactions on the tRNA convert PreQ1 to queuine (Q), resulting in the hypermodified nucleoside queuosine (7-(((4,5-cis-dihydroxy-2-cyclopenten-1-yl)amino)methyl)-7-deazaguanosine). In Haemophilus influenzae (strain PittEE), this protein is Queuine tRNA-ribosyltransferase.